Here is a 435-residue protein sequence, read N- to C-terminus: MIILWSLIVHLQLTCLHLILQTPNLEALDALEIINYQTTKYTIPEVWKEQPVATIGEDVDDQDTEDEESYLKFGDDAEVRTSVSEGLHEGAFCRRSFDGRSGYCILAYQCLHVIREYRVHGTRIDICTHRNNVPVICCPLADKHVLAQRISATKCQEYNAAARRLHLTDTGRTFSGKQCVPSVPLIVGGTPTRHGLFPHMAALGWTQGSGSKDQDIKWGCGGALVSELYVLTAAHCATSGSKPPDMVRLGARQLNETSATQQDIKILIIVLHPKYRSSAYYHDIALLKLTRRVKFSEQVRPACLWQLPELQIPTVVAAGWGRTEFLGAKSNALRQVDLDVVPQMTCKQIYRKERRLPRGIIEGQFCAGYLPGGRDTCQGDSGGPIHALLPEYNCVAFVVGITSFGKFCAAPNAPGVYTRLYSYLDWIEKIAFKQH.

The first 27 residues, 1–27 (MIILWSLIVHLQLTCLHLILQTPNLEA), serve as a signal peptide directing secretion. The Clip domain occupies 92–138 (FCRRSFDGRSGYCILAYQCLHVIREYRVHGTRIDICTHRNNVPVICC). Disulfide bonds link Cys-93-Cys-137, Cys-104-Cys-127, Cys-110-Cys-138, Cys-179-Cys-303, Cys-220-Cys-236, Cys-346-Cys-366, and Cys-377-Cys-408. A Peptidase S1 domain is found at 186–432 (IVGGTPTRHG…YLDWIEKIAF (247 aa)). Catalysis depends on His-235, which acts as the Charge relay system. A glycan (N-linked (GlcNAc...) asparagine) is linked at Asn-255. The active-site Charge relay system is Asp-283. Ser-381 functions as the Charge relay system in the catalytic mechanism.

It belongs to the peptidase S1 family. CLIP subfamily. As to quaternary structure, interacts (via N-terminal prodomain) with ea/easter (via Peptidase domain); leads to proteolytic activation of ea by snk. This interaction does not require sulfation of a vitelline membrane component by pip but proteolytic cleavage of ea by snk does. Proteolytically activated by gd. May also be cleaved by another protease.

The protein resides in the secreted. Functionally, component of the extracellular signaling pathway that establishes the dorsal-ventral pathway of the embryo. A protease cascade involving ndl, gd, snk and ea results in activation of the spz Toll receptor ligand; acts downstream of ndl and gd. Activation of ea requires both activation of the ndl-gd-snk protease cascade and sulfation of a vitelline membrane component by pip. Localized activation of the Toll receptor in the ventral region of the embryo defines cell identities along the dorsal-ventral continuum. In Drosophila melanogaster (Fruit fly), this protein is Serine protease snk.